The primary structure comprises 227 residues: Large ribosomal subunit protein bL25 (227 aa).

Belongs to the bacterial ribosomal protein bL25 family. CTC subfamily. As to quaternary structure, part of the 50S ribosomal subunit; part of the 5S rRNA/L5/L18/L25 subcomplex. Contacts the 5S rRNA. Binds to the 5S rRNA independently of L5 and L18.

In terms of biological role, this is one of the proteins that binds to the 5S RNA in the ribosome where it forms part of the central protuberance. In Polaromonas sp. (strain JS666 / ATCC BAA-500), this protein is Large ribosomal subunit protein bL25.